The primary structure comprises 259 residues: 3-deoxy-manno-octulosonate cytidylyltransferase (259 aa).

Belongs to the KdsB family.

The protein localises to the cytoplasm. It catalyses the reaction 3-deoxy-alpha-D-manno-oct-2-ulosonate + CTP = CMP-3-deoxy-beta-D-manno-octulosonate + diphosphate. The protein operates within nucleotide-sugar biosynthesis; CMP-3-deoxy-D-manno-octulosonate biosynthesis; CMP-3-deoxy-D-manno-octulosonate from 3-deoxy-D-manno-octulosonate and CTP: step 1/1. It participates in bacterial outer membrane biogenesis; lipopolysaccharide biosynthesis. Its function is as follows. Activates KDO (a required 8-carbon sugar) for incorporation into bacterial lipopolysaccharide in Gram-negative bacteria. The sequence is that of 3-deoxy-manno-octulosonate cytidylyltransferase from Xanthomonas oryzae pv. oryzae (strain KACC10331 / KXO85).